The sequence spans 971 residues: Exportin-2 (971 aa).

An Importin N-terminal domain is found at 29 to 102 (AEKFLESVEG…KANIVNLMLS (74 aa)).

The protein belongs to the XPO2/CSE1 family. In terms of assembly, interacts with cftr.

It is found in the cytoplasm. Its subcellular location is the nucleus. Export receptor for importin alpha. Mediates importin-alpha re-export from the nucleus to the cytoplasm after import substrates have been released into the nucleoplasm. Negatively regulates fluid secretion and plays a role in fluid homeostasis by down-regulating cftr activity. This Pagrus major (Red sea bream) protein is Exportin-2 (cse1l).